The following is a 195-amino-acid chain: Phosphoheptose isomerase (195 aa).

The 160-residue stretch at Leu36–Glu195 folds into the SIS domain. Asn51–Gly53 lines the substrate pocket. Residues His60 and Glu64 each coordinate Zn(2+). Residues Glu64, Asn93–Asp94, Ser119–Ser121, Ser124, and Gln174 each bind substrate. Gln174 and His182 together coordinate Zn(2+).

Belongs to the SIS family. GmhA subfamily. In terms of assembly, homotetramer. Zn(2+) is required as a cofactor.

It localises to the cytoplasm. The catalysed reaction is 2 D-sedoheptulose 7-phosphate = D-glycero-alpha-D-manno-heptose 7-phosphate + D-glycero-beta-D-manno-heptose 7-phosphate. It functions in the pathway carbohydrate biosynthesis; D-glycero-D-manno-heptose 7-phosphate biosynthesis; D-glycero-alpha-D-manno-heptose 7-phosphate and D-glycero-beta-D-manno-heptose 7-phosphate from sedoheptulose 7-phosphate: step 1/1. Functionally, catalyzes the isomerization of sedoheptulose 7-phosphate in D-glycero-D-manno-heptose 7-phosphate. This is Phosphoheptose isomerase from Methylococcus capsulatus (strain ATCC 33009 / NCIMB 11132 / Bath).